The following is a 21-amino-acid chain: Nigrocin-2JDa (21 aa).

Cysteines 15 and 21 form a disulfide.

In terms of tissue distribution, expressed by the skin glands.

Its subcellular location is the secreted. Has antibacterial activity against E.coli ATCC 25992 (MIC=16 uM), E.coli CIB 84492 (MIC=16 uM), S.aureus ATCC 25923 (MIC=16 uM) and S.aureus CIB 85462 (MIC=8 uM). Has antifungal activity against C.albicans (MIC=63 uM). Has hemolytic activity against rabbit erythrocytes. The protein is Nigrocin-2JDa of Odorrana jingdongensis (Jingdong frog).